We begin with the raw amino-acid sequence, 197 residues long: Ribosome maturation factor RimP (197 aa).

It belongs to the RimP family.

It is found in the cytoplasm. Its function is as follows. Required for maturation of 30S ribosomal subunits. The sequence is that of Ribosome maturation factor RimP from Acidovorax sp. (strain JS42).